We begin with the raw amino-acid sequence, 260 residues long: ATP synthase subunit a (260 aa).

7 helical membrane passes run 30-50 (IAFT…IVFV), 96-116 (LFAF…LVGV), 125-145 (FTVT…VGFA), 151-171 (FFSL…IFPI), 187-207 (LFVA…FVIS), 213-233 (VGTF…ICAL), and 234-254 (ELLV…VYLN).

The protein belongs to the ATPase A chain family. As to quaternary structure, F-type ATPases have 2 components, CF(1) - the catalytic core - and CF(0) - the membrane proton channel. CF(1) has five subunits: alpha(3), beta(3), gamma(1), delta(1), epsilon(1). CF(0) has three main subunits: a(1), b(2) and c(9-12). The alpha and beta chains form an alternating ring which encloses part of the gamma chain. CF(1) is attached to CF(0) by a central stalk formed by the gamma and epsilon chains, while a peripheral stalk is formed by the delta and b chains.

The protein localises to the cell inner membrane. Its function is as follows. Key component of the proton channel; it plays a direct role in the translocation of protons across the membrane. The sequence is that of ATP synthase subunit a from Novosphingobium aromaticivorans (strain ATCC 700278 / DSM 12444 / CCUG 56034 / CIP 105152 / NBRC 16084 / F199).